The sequence spans 384 residues: ATP phosphoribosyltransferase regulatory subunit (384 aa).

Belongs to the class-II aminoacyl-tRNA synthetase family. HisZ subfamily. Heteromultimer composed of HisG and HisZ subunits.

The protein localises to the cytoplasm. Its pathway is amino-acid biosynthesis; L-histidine biosynthesis; L-histidine from 5-phospho-alpha-D-ribose 1-diphosphate: step 1/9. In terms of biological role, required for the first step of histidine biosynthesis. May allow the feedback regulation of ATP phosphoribosyltransferase activity by histidine. The polypeptide is ATP phosphoribosyltransferase regulatory subunit (Paracidovorax citrulli (strain AAC00-1) (Acidovorax citrulli)).